A 269-amino-acid chain; its full sequence is Hydroxyethylthiazole kinase (269 aa).

Met45 is a substrate binding site. Positions 121 and 167 each coordinate ATP. Residue Gly194 participates in substrate binding.

It belongs to the Thz kinase family. The cofactor is Mg(2+).

It carries out the reaction 5-(2-hydroxyethyl)-4-methylthiazole + ATP = 4-methyl-5-(2-phosphooxyethyl)-thiazole + ADP + H(+). The protein operates within cofactor biosynthesis; thiamine diphosphate biosynthesis; 4-methyl-5-(2-phosphoethyl)-thiazole from 5-(2-hydroxyethyl)-4-methylthiazole: step 1/1. Catalyzes the phosphorylation of the hydroxyl group of 4-methyl-5-beta-hydroxyethylthiazole (THZ). The protein is Hydroxyethylthiazole kinase of Bacillus mycoides (strain KBAB4) (Bacillus weihenstephanensis).